The following is a 358-amino-acid chain: Methylthioribose-1-phosphate isomerase (358 aa).

Substrate-binding positions include 54–56 (RGA), Arg-96, and Gln-205. Asp-246 (proton donor) is an active-site residue. Position 256–257 (256–257 (NK)) interacts with substrate.

Belongs to the eIF-2B alpha/beta/delta subunits family. MtnA subfamily.

The enzyme catalyses 5-(methylsulfanyl)-alpha-D-ribose 1-phosphate = 5-(methylsulfanyl)-D-ribulose 1-phosphate. It participates in amino-acid biosynthesis; L-methionine biosynthesis via salvage pathway; L-methionine from S-methyl-5-thio-alpha-D-ribose 1-phosphate: step 1/6. Functionally, catalyzes the interconversion of methylthioribose-1-phosphate (MTR-1-P) into methylthioribulose-1-phosphate (MTRu-1-P). The protein is Methylthioribose-1-phosphate isomerase of Pseudomonas syringae pv. tomato (strain ATCC BAA-871 / DC3000).